The following is a 263-amino-acid chain: MAGLTDKALVRERFRRTLGSYAGEAAVQRAMAQELVSMAARHASGIHFERVLEVGSGSGMLTELMLEAFSIERYTANDLVEESRECLQGIMDRHPEVVFNFLGGDVESLPFLPERRDLVVSNATLQWLDDLETFLGRIADSMAPGGLFLFTSFSSSNMQEIAAILGTALTYRSIAETGELCERYFEVLELREAEITLTFSSPEAVLRHISRTGVNALARKPWTKGRQKEFSDRYRSMFSQAEGVRLTYNPVYCCLRKRQEGSL.

It belongs to the methyltransferase superfamily.

The enzyme catalyses malonyl-[ACP] + S-adenosyl-L-methionine = malonyl-[ACP] methyl ester + S-adenosyl-L-homocysteine. It functions in the pathway cofactor biosynthesis; biotin biosynthesis. Its function is as follows. Converts the free carboxyl group of a malonyl-thioester to its methyl ester by transfer of a methyl group from S-adenosyl-L-methionine (SAM). It allows to synthesize pimeloyl-ACP via the fatty acid synthetic pathway. This Chlorobium luteolum (strain DSM 273 / BCRC 81028 / 2530) (Pelodictyon luteolum) protein is Malonyl-[acyl-carrier protein] O-methyltransferase.